A 250-amino-acid polypeptide reads, in one-letter code: Green-light absorbing proteorhodopsin (250 aa).

Residues 1–18 (MGKLLLILGSVIALPTFA) form the signal peptide. At 19-29 (AGGGDLDASDY) the chain is on the extracellular side. The chain crosses the membrane as a helical span at residues 30–53 (TGVSFWLVTAALLASTVFFFVERD). Topologically, residues 54-58 (RVSAK) are cytoplasmic. Residues 59–87 (WKTSLTVSGLVTGIAFWHYMYMRGVWIET) traverse the membrane as a helical segment. At 88 to 90 (GDS) the chain is on the extracellular side. The helical transmembrane segment at 91-118 (PTVFRYIDWLLTVPLLICEFYLILAAAT) threads the bilayer. At 119–121 (NVA) the chain is on the cytoplasmic side. A helical transmembrane segment spans residues 122 to 144 (GSLFKKLLVGSLVMLVFGYMGEA). Residues 145 to 147 (GIM) are Extracellular-facing. A helical membrane pass occupies residues 148–177 (AAWPAFIIGCLAWVYMIYELWAGEGKSACN). Residues 178–180 (TAS) lie on the Cytoplasmic side of the membrane. Residues 181–208 (PAVQSAYNTMMYIIIFGWAIYPVGYFTG) traverse the membrane as a helical segment. At 209–218 (YLMGDGGSAL) the chain is on the extracellular side. A helical membrane pass occupies residues 219-249 (NLNLIYNLADFVNKILFGLIIWNVAVKESSN). Lys232 carries the post-translational modification N6-(retinylidene)lysine. Ala250 is a topological domain (cytoplasmic).

This sequence belongs to the archaeal/bacterial/fungal opsin family. Homopentamer. GPR protomers assemble into a pentamer around a central pore with a C5 symmetry axis. Contains one covalently linked retinal chromophore per subunit.

The protein resides in the cell membrane. Light-driven proton pump. This Unknown prokaryotic organism protein is Green-light absorbing proteorhodopsin.